Here is a 91-residue protein sequence, read N- to C-terminus: MAHKKGVGSSKNGRDSNPKYLGVKKFGGEQVLAGNILVRQRGTKFKAGANVGMGRDHTLFALEHGKVVFTNKGNKGRFISIEVAQTEVAAD.

This sequence belongs to the bacterial ribosomal protein bL27 family.

The polypeptide is Large ribosomal subunit protein bL27 (Deinococcus deserti (strain DSM 17065 / CIP 109153 / LMG 22923 / VCD115)).